The following is a 336-amino-acid chain: MALADRLLAAWYAGHPALALLRPLEALYRRVVTRKRARFLSGESASYRAPVPVIVVGNITIGGTGKTPMILWLIEHCRRQGLKVGVVSRGYGAEPPRLPWRVEAIQSAEQAGDEPLLIVQRTGVPLMIDPDRSRAVQALLASEPLDLILCDDGMQHYRLARDLELVLIDAARGLGNGRCLPAGPLREPAERLQEVDAVLFNGASADRPEGFAFHLQPSALVNLRTGERRALDFFPAGQRLHAVAGIGNPQRFFNTLLGLNWQPVPHPFADHAQFSAQSLAFSPSLPLVMTEKDAVKCRAFAADDWWYLAVEALPTPAFCGWFDSQLQRLLPGHRTP.

60–67 (TIGGTGKT) is a binding site for ATP.

The protein belongs to the LpxK family.

The enzyme catalyses a lipid A disaccharide + ATP = a lipid IVA + ADP + H(+). It participates in glycolipid biosynthesis; lipid IV(A) biosynthesis; lipid IV(A) from (3R)-3-hydroxytetradecanoyl-[acyl-carrier-protein] and UDP-N-acetyl-alpha-D-glucosamine: step 6/6. Transfers the gamma-phosphate of ATP to the 4'-position of a tetraacyldisaccharide 1-phosphate intermediate (termed DS-1-P) to form tetraacyldisaccharide 1,4'-bis-phosphate (lipid IVA). This chain is Tetraacyldisaccharide 4'-kinase, found in Pseudomonas putida (strain W619).